The following is a 952-amino-acid chain: Probable RNA-binding protein 19 (952 aa).

An RRM 1 domain is found at 2 to 79 (SRLIVKNLPN…TRITVEFCKS (78 aa)). 3 disordered regions span residues 85–126 (KPRA…LEKL), 159–267 (KAKT…RGAV), and 367–395 (KQAPTARGPPKSTTPWQGRTLGENEEEED). A compositionally biased stretch (low complexity) spans 95 to 109 (KSSQPKQPSQDSVPS). Residues 163–180 (KASSDYLNFDSDSNSDSG) show a composition bias toward polar residues. Phosphoserine occurs at positions 177, 179, and 183. 2 stretches are compositionally biased toward acidic residues: residues 181–196 (QESEEEPAREDPEEEQ) and 224–251 (SSEDEDEEDSEDEAVNCEEGSEEEEEEG). RRM domains lie at 293–368 (YTVK…REKQ) and 400–478 (GRLF…PSTI). A Glycyl lysine isopeptide (Lys-Gly) (interchain with G-Cter in SUMO2) cross-link involves residue K479. A disordered region spans residues 481–504 (EASQEANAPGSSYKKKKEAMDKAN). Residues 584–656 (TVILAKNLPA…VPLYLEWAPI (73 aa)) form the RRM 4 domain. A compositionally biased stretch (basic and acidic residues) spans 664 to 679 (QKKDSQHEQPAEKAEV). A disordered region spans residues 664 to 719 (QKKDSQHEQPAEKAEVEQETVLDPEGEKASVEGAEASTGKMEEEEEEEEEEEEESI). S693 bears the Phosphoserine mark. The span at 705-718 (EEEEEEEEEEEEES) shows a compositional bias: acidic residues. RRM domains follow at residues 722–803 (CTLF…ISER) and 824–904 (SKIL…WADS). Phosphoserine is present on residues S928 and S944.

Belongs to the RRM MRD1 family. As to expression, expressed in the crypts of Lieberkuhn of the intestine (at protein level).

It is found in the nucleus. Its subcellular location is the nucleolus. It localises to the nucleoplasm. The protein resides in the cytoplasm. The protein localises to the chromosome. Functionally, plays a role in embryo pre-implantation development. This chain is Probable RNA-binding protein 19 (Rbm19), found in Mus musculus (Mouse).